A 354-amino-acid chain; its full sequence is Putative cinnamyl alcohol dehydrogenase 4 (354 aa).

Zn(2+) is bound by residues C47, H69, E70, C100, C103, C106, C114, and C163. NADP(+)-binding positions include T167, 188-193 (GLGGLG), 211-216 (STSESK), T251, and 297-299 (SVT).

The protein belongs to the zinc-containing alcohol dehydrogenase family. As to quaternary structure, homodimer. Zn(2+) serves as cofactor.

It catalyses the reaction (E)-cinnamyl alcohol + NADP(+) = (E)-cinnamaldehyde + NADPH + H(+). The catalysed reaction is (E)-coniferol + NADP(+) = (E)-coniferaldehyde + NADPH + H(+). The enzyme catalyses (E)-sinapyl alcohol + NADP(+) = (E)-sinapaldehyde + NADPH + H(+). It carries out the reaction (E)-4-coumaroyl alcohol + NADP(+) = (E)-4-coumaraldehyde + NADPH + H(+). It catalyses the reaction (E)-caffeyl alcohol + NADP(+) = (E)-caffeyl aldehyde + NADPH + H(+). It participates in aromatic compound metabolism; phenylpropanoid biosynthesis. In terms of biological role, involved in lignin biosynthesis. Catalyzes the final step specific for the production of lignin monomers. Catalyzes the NADPH-dependent reduction of coniferaldehyde, 5-hydroxyconiferaldehyde, sinapaldehyde, 4-coumaraldehyde and caffeyl aldehyde to their respective alcohols. This chain is Putative cinnamyl alcohol dehydrogenase 4, found in Oryza sativa subsp. japonica (Rice).